The sequence spans 106 residues: BLOC-1-related complex subunit 7 (106 aa).

Belongs to the BORCS7 family. In terms of assembly, component of the BLOC-one-related complex (BORC) which is composed of BLOC1S1, BLOC1S2, BORCS5, BORCS6, BORCS7, BORCS8, KXD1 and SNAPIN.

It is found in the lysosome membrane. Functionally, as part of the BORC complex may play a role in lysosomes movement and localization at the cell periphery. Associated with the cytosolic face of lysosomes, the BORC complex may recruit ARL8B and couple lysosomes to microtubule plus-end-directed kinesin motor. The polypeptide is BLOC-1-related complex subunit 7 (Homo sapiens (Human)).